The chain runs to 639 residues: MSEPIEWLEDGTPYSPRFSDRYHSEHGGLEQARGTFLAGCGLPQAWQNQPQWRVLETGFGLGLNFLVTWAAWRADPHRPQRLHFVSCEAWPVSAADLLRAAPIDSTLQSLAQQLAAQYWGLLPGVHRLSFDGGQVLLTLYIGDAQALLRQQQPTADSVYLDGFDPQHNPQMWDIHTLKAVARCCRRGTRLATWTVARGVRDGLVQCGFEVQKVPGVRPKRDNLQATYAPRWEPRAGQPVLPDATVAAPARCLVVGAGLAGAAVAASLAHRGWQVQVLDRADHPAAGASGLPAGVFAPNVSQDDNLISRLSRAGVRITLNTLAQLPAETRGTDWSACGTLEHRVDGTTGLAWSDGPGLDWSRPATPAQLQANGLSADTVACWHEHAGWVRPPQLIAHLLNDPAIRWRGSAAVAELRRTTVDGQPLWQALDAEGHVLAEAELAVVCAGHHTGPLTHAHWPMNPLRGQLAWGLHAQAPAGAPWPPQPLNGNGNLVPRVPLQDGAGWVLGSTFERLKTALPPSPDDHAKGLATNQAKLHALLPPLGAAMDAAFSQAATAPDGPVRTWAAVRCGALDRRPIVGPVDSVRQPGLWLCTAMGARGLTLSLLCGELIAARLHSEPLPLDAPLARALSSERWLGYEPQ.

The tRNA (mnm(5)s(2)U34)-methyltransferase stretch occupies residues 1-228 (MSEPIEWLED…KRDNLQATYA (228 aa)). Residues 254–639 (VGAGLAGAAV…SERWLGYEPQ (386 aa)) form an FAD-dependent cmnm(5)s(2)U34 oxidoreductase region.

In the N-terminal section; belongs to the methyltransferase superfamily. tRNA (mnm(5)s(2)U34)-methyltransferase family. The protein in the C-terminal section; belongs to the DAO family. The cofactor is FAD.

It is found in the cytoplasm. It catalyses the reaction 5-aminomethyl-2-thiouridine(34) in tRNA + S-adenosyl-L-methionine = 5-methylaminomethyl-2-thiouridine(34) in tRNA + S-adenosyl-L-homocysteine + H(+). Catalyzes the last two steps in the biosynthesis of 5-methylaminomethyl-2-thiouridine (mnm(5)s(2)U) at the wobble position (U34) in tRNA. Catalyzes the FAD-dependent demodification of cmnm(5)s(2)U34 to nm(5)s(2)U34, followed by the transfer of a methyl group from S-adenosyl-L-methionine to nm(5)s(2)U34, to form mnm(5)s(2)U34. The chain is tRNA 5-methylaminomethyl-2-thiouridine biosynthesis bifunctional protein MnmC from Acidovorax sp. (strain JS42).